The sequence spans 106 residues: Iron-sulfur cluster assembly protein CyaY (106 aa).

This sequence belongs to the frataxin family.

Functionally, involved in iron-sulfur (Fe-S) cluster assembly. May act as a regulator of Fe-S biogenesis. In Yersinia enterocolitica serotype O:8 / biotype 1B (strain NCTC 13174 / 8081), this protein is Iron-sulfur cluster assembly protein CyaY.